The primary structure comprises 753 residues: RNA-directed RNA polymerase catalytic subunit (753 aa).

Residues 52-82 (KGKWTTNTETGAPQLNPIDGPLPEDNEPSGY) are disordered. Residues 55–64 (WTTNTETGAP) show a composition bias toward polar residues. 2 short sequence motifs (nuclear localization signal) span residues 187–195 (RKRRVRDNM) and 203–216 (RTIG…NKKS). A promoter-binding site region spans residues 249-256 (RGFVYFVE). One can recognise a RdRp catalytic domain in the interval 286-483 (VRKMMTNSQD…GINMSKKKSY (198 aa)).

Belongs to the influenza viruses polymerase PB1 family. Influenza RNA polymerase is composed of three subunits: PB1, PB2 and PA. Interacts (via N-terminus) with PA (via C-terminus). Interacts (via C-terminus) with PB2 (via N-terminus); this interaction is essential for transcription initiation. Phosphorylated by host PRKCA.

It localises to the host nucleus. The protein resides in the host cytoplasm. It carries out the reaction RNA(n) + a ribonucleoside 5'-triphosphate = RNA(n+1) + diphosphate. In terms of biological role, RNA-dependent RNA polymerase which is responsible for replication and transcription of virus RNA segments. The transcription of viral mRNAs occurs by a unique mechanism called cap-snatching. 5' methylated caps of cellular mRNAs are cleaved after 10-13 nucleotides by PA. In turn, these short capped RNAs are used as primers by PB1 for transcription of viral mRNAs. During virus replication, PB1 initiates RNA synthesis and copy vRNA into complementary RNA (cRNA) which in turn serves as a template for the production of more vRNAs. The sequence is that of RNA-directed RNA polymerase catalytic subunit from Influenza A virus (strain A/Chicken/Hong Kong/96.1/2002 H5N1 genotype Y).